We begin with the raw amino-acid sequence, 356 residues long: 3-isopropylmalate dehydrogenase (356 aa).

Substrate-binding residues include Arg95, Arg105, Arg133, and Asp223. The Mg(2+) site is built by Asp223, Asp247, and Asp251. 281–293 (GSAPDIAGQNKAN) provides a ligand contact to NAD(+).

This sequence belongs to the isocitrate and isopropylmalate dehydrogenases family. LeuB type 1 subfamily. Homodimer. Requires Mg(2+) as cofactor. Mn(2+) is required as a cofactor.

The protein resides in the cytoplasm. The enzyme catalyses (2R,3S)-3-isopropylmalate + NAD(+) = 4-methyl-2-oxopentanoate + CO2 + NADH. It participates in amino-acid biosynthesis; L-leucine biosynthesis; L-leucine from 3-methyl-2-oxobutanoate: step 3/4. In terms of biological role, catalyzes the oxidation of 3-carboxy-2-hydroxy-4-methylpentanoate (3-isopropylmalate) to 3-carboxy-4-methyl-2-oxopentanoate. The product decarboxylates to 4-methyl-2 oxopentanoate. The polypeptide is 3-isopropylmalate dehydrogenase (Neisseria meningitidis serogroup B (strain ATCC BAA-335 / MC58)).